The sequence spans 63 residues: Rubredoxin-2 (63 aa).

Residues 8–59 enclose the Rubredoxin-like domain; that stretch reads YKLFRCLQCGFEYDEAIGWPDDGIEPGTRWDEIPEDWSCPDCGAAKVDFEMV. Residues Cys13, Cys16, Cys46, and Cys49 each coordinate Fe cation.

The protein belongs to the rubredoxin family. Requires Fe(3+) as cofactor.

Its function is as follows. Involved in the hydrocarbon hydroxylating system, which transfers electrons from NADH to rubredoxin reductase and then through rubredoxin to alkane 1 monooxygenase. This chain is Rubredoxin-2 (rubA2), found in Rhodococcus erythropolis (Arthrobacter picolinophilus).